The chain runs to 550 residues: Hydroxylamine reductase (550 aa).

Residues Cys7, Cys10, Cys19, and Cys25 each coordinate [4Fe-4S] cluster. Residues His244, Glu268, Cys312, Cys405, Cys433, Cys458, Glu493, and Lys495 each contribute to the hybrid [4Fe-2O-2S] cluster site. Cysteine persulfide is present on Cys405.

This sequence belongs to the HCP family. [4Fe-4S] cluster serves as cofactor. It depends on hybrid [4Fe-2O-2S] cluster as a cofactor.

Its subcellular location is the cytoplasm. It catalyses the reaction A + NH4(+) + H2O = hydroxylamine + AH2 + H(+). Functionally, catalyzes the reduction of hydroxylamine to form NH(3) and H(2)O. The protein is Hydroxylamine reductase of Porphyromonas gingivalis (strain ATCC 33277 / DSM 20709 / CIP 103683 / JCM 12257 / NCTC 11834 / 2561).